The following is a 341-amino-acid chain: Anthranilate phosphoribosyltransferase (341 aa).

5-phospho-alpha-D-ribose 1-diphosphate-binding positions include glycine 80, 83–84 (GD), threonine 88, 90–93 (NIST), 108–116 (KHGNRSVSS), and serine 120. An anthranilate-binding site is contributed by glycine 80. Serine 92 contributes to the Mg(2+) binding site. Asparagine 111 provides a ligand contact to anthranilate. Arginine 166 serves as a coordination point for anthranilate. Mg(2+) is bound by residues aspartate 225 and glutamate 226.

Belongs to the anthranilate phosphoribosyltransferase family. Homodimer. It depends on Mg(2+) as a cofactor.

The catalysed reaction is N-(5-phospho-beta-D-ribosyl)anthranilate + diphosphate = 5-phospho-alpha-D-ribose 1-diphosphate + anthranilate. It participates in amino-acid biosynthesis; L-tryptophan biosynthesis; L-tryptophan from chorismate: step 2/5. Catalyzes the transfer of the phosphoribosyl group of 5-phosphorylribose-1-pyrophosphate (PRPP) to anthranilate to yield N-(5'-phosphoribosyl)-anthranilate (PRA). This Shouchella clausii (strain KSM-K16) (Alkalihalobacillus clausii) protein is Anthranilate phosphoribosyltransferase.